Consider the following 261-residue polypeptide: DNA oxidative demethylase ALKBH2 (261 aa).

The segment at 1 to 57 (MDRFLVKGAQGGLLRKQEEQEPTGEEPAVLGGDKESTRKRPRREAPGNGGHSAGPSW) is disordered. The PCNA-binding motif lies at 3 to 7 (RFLVK). Residues 102-104 (FGK) and 122-124 (YTF) each bind substrate. Residues 152–257 (TFNFVLINRY…RVNLTFRKIL (106 aa)) enclose the Fe2OG dioxygenase domain. 2-oxoglutarate contacts are provided by Asn-159, Tyr-161, and His-171. Fe cation contacts are provided by His-171 and Asp-173. Asp-174 is a substrate binding site. Residues His-236, Arg-248, Thr-252, and Arg-254 each coordinate 2-oxoglutarate. A Fe cation-binding site is contributed by His-236.

This sequence belongs to the alkB family. In terms of assembly, interacts with PCNA homotrimer; this interaction is enhanced during the S-phase of the cell cycle. Interacts with nucleolar proteins NCL, UBTF and NPM1. Interacts with XRCC5-XRCC6 heterodimer. It depends on Fe(2+) as a cofactor. In terms of tissue distribution, detected in colon, small intestine, ovary, testis, prostate, skeletal muscle, heart, liver and urinary bladder.

The protein localises to the nucleus. The protein resides in the nucleolus. It is found in the nucleoplasm. The enzyme catalyses a methylated nucleobase within DNA + 2-oxoglutarate + O2 = a nucleobase within DNA + formaldehyde + succinate + CO2. It catalyses the reaction an N(1)-methyl-2'-deoxyadenosine in double-stranded DNA + 2-oxoglutarate + O2 = a 2'-deoxyadenosine in double-stranded DNA + formaldehyde + succinate + CO2 + H(+). The catalysed reaction is an N(1)-methyl-2'-deoxyadenosine in single-stranded DNA + 2-oxoglutarate + O2 = a 2'-deoxyadenosine in single-stranded DNA + formaldehyde + succinate + CO2 + H(+). It carries out the reaction an N(3)-methyl-2'-deoxycytidine in double-stranded DNA + 2-oxoglutarate + O2 = a 2'-deoxycytidine in double-stranded DNA + formaldehyde + succinate + CO2 + H(+). The enzyme catalyses an N(3)-methyl-2'-deoxycytidine in single-stranded DNA + 2-oxoglutarate + O2 = a 2'-deoxycytidine in single-stranded DNA + formaldehyde + succinate + CO2 + H(+). It catalyses the reaction a 1,N(6)-etheno-2'-deoxyadenosine in double-stranded DNA + 2-oxoglutarate + O2 + H2O = a 2'-deoxyadenosine in double-stranded DNA + glyoxal + succinate + CO2. The catalysed reaction is a 1,N(6)-etheno-2'-deoxyadenosine in single-stranded DNA + 2-oxoglutarate + O2 + H2O = a 2'-deoxyadenosine in single-stranded DNA + glyoxal + succinate + CO2. It carries out the reaction a 3,N(4)-etheno-2'-deoxycytidine in double-stranded DNA + 2-oxoglutarate + O2 + H2O = a 2'-deoxycytidine in double-stranded DNA + glyoxal + succinate + CO2. The enzyme catalyses a 3,N(4)-etheno-2'-deoxycytidine in single-stranded DNA + 2-oxoglutarate + O2 + H2O = a 2'-deoxycytidine in single-stranded DNA + glyoxal + succinate + CO2. It catalyses the reaction a 1,N(2)-etheno-2'-deoxyguanosine in double-stranded DNA + 2-oxoglutarate + O2 + H2O = a 2'-deoxyguanosine in double-stranded DNA + glyoxal + succinate + CO2. Its activity is regulated as follows. Activated by ascorbate and magnesium ions. In terms of biological role, dioxygenase that repairs alkylated nucleic acid bases by direct reversal oxidative dealkylation. Can process both double-stranded (ds) and single-stranded (ss) DNA substrates, with a strong preference for dsDNA. Uses molecular oxygen, 2-oxoglutarate and iron as cofactors to oxidize the alkyl groups that are subsequently released as aldehydes, regenerating the undamaged bases. Probes the base pair stability, locates a weakened base pair and flips the damaged base to accommodate the lesion in its active site for efficient catalysis. Repairs monoalkylated bases, specifically N1-methyladenine and N3-methylcytosine, as well as higher order alkyl adducts such as bases modified with exocyclic bridged adducts known as etheno adducts including 1,N6-ethenoadenine, 3,N4-ethenocytosine and 1,N2-ethenoguanine. Acts as a gatekeeper of genomic integrity under alkylation stress. Efficiently repairs alkylated lesions in ribosomal DNA (rDNA). These lesions can cause ss- and dsDNA strand breaks that severely impair rDNA transcription. In a response mechanism to DNA damage, associates with PCNA at replication forks to repair alkylated adducts prior to replication. This Homo sapiens (Human) protein is DNA oxidative demethylase ALKBH2 (ALKBH2).